The sequence spans 713 residues: Pro-neuregulin-3, membrane-bound isoform (713 aa).

At 1 to 362 (MSEGAAGASP…MESEDVYQRQ (362 aa)) the chain is on the extracellular side. Disordered regions lie at residues 28-48 (AAAA…AAEP), 119-220 (SSFP…STQA), and 251-282 (AAAS…TTYS). The segment covering 34-44 (AGGGPDGGGEG) has biased composition (gly residues). Positions 127-148 (TTTTTTSTTSPATPSAGGAASS) are enriched in low complexity. The segment covering 149–163 (RTPNRISTRLTTITR) has biased composition (polar residues). Low complexity-rich tracts occupy residues 195–207 (STTA…STPG) and 254–274 (SSSS…STSP). Residues 288 to 331 (HFKPCRDKDLAYCLNDGECFVIETLTGSHKHCRCKEGYQGVRCD) form the EGF-like domain. Intrachain disulfides connect Cys-292/Cys-306, Cys-300/Cys-319, and Cys-321/Cys-330. The chain crosses the membrane as a helical span at residues 363-383 (VLSISCIIFGIVIVGMFCAAF). Residues 384 to 713 (YFKSKKQAKQ…EIQRDSVLTK (330 aa)) are Cytoplasmic-facing. The interval 449-496 (SAPQSFPEVTSPDRGSQPIKHHSPGQRSGMLHRNTFRRAPPSPRSRLG) is disordered.

This sequence belongs to the neuregulin family. As to quaternary structure, interacts with ERBB4. In terms of processing, proteolytic cleavage close to the plasma membrane on the external face leads to the release of the soluble growth factor form. Post-translationally, extensive glycosylation precedes the proteolytic cleavage. As to expression, expressed in sympathetic, motor, and sensory neurons.

The protein localises to the cell membrane. It localises to the secreted. Functionally, direct ligand for the ERBB4 tyrosine kinase receptor. Binding results in ligand-stimulated tyrosine phosphorylation and activation of the receptor. Does not bind to the EGF receptor, ERBB2 or ERBB3 receptors. The protein is Pro-neuregulin-3, membrane-bound isoform (Nrg3) of Mus musculus (Mouse).